A 40-amino-acid polypeptide reads, in one-letter code: Photosystem II reaction center protein J (40 aa).

The helical transmembrane segment at 8–28 (IPLWIIGTVTGIPVIGLIGIF) threads the bilayer.

It belongs to the PsbJ family. As to quaternary structure, PSII is composed of 1 copy each of membrane proteins PsbA, PsbB, PsbC, PsbD, PsbE, PsbF, PsbH, PsbI, PsbJ, PsbK, PsbL, PsbM, PsbT, PsbX, PsbY, PsbZ, Psb30/Ycf12, at least 3 peripheral proteins of the oxygen-evolving complex and a large number of cofactors. It forms dimeric complexes.

The protein resides in the plastid. It is found in the chloroplast thylakoid membrane. In terms of biological role, one of the components of the core complex of photosystem II (PSII). PSII is a light-driven water:plastoquinone oxidoreductase that uses light energy to abstract electrons from H(2)O, generating O(2) and a proton gradient subsequently used for ATP formation. It consists of a core antenna complex that captures photons, and an electron transfer chain that converts photonic excitation into a charge separation. This Citrus sinensis (Sweet orange) protein is Photosystem II reaction center protein J.